Here is a 23-residue protein sequence, read N- to C-terminus: Aldehyde dehydrogenase (23 aa).

It belongs to the aldehyde dehydrogenase family.

The catalysed reaction is an aldehyde + NAD(+) + H2O = a carboxylate + NADH + 2 H(+). The sequence is that of Aldehyde dehydrogenase from Moraxella sp. (strain TAE123).